Reading from the N-terminus, the 351-residue chain is MSGSETGLMAATRESMQFTMALHQQQQHSQAQPQQSQNRPLSFGGDDGTALYKQPMRSVSPPQQYQPNSAGENSVLNMNLPGGESGGMTGTGSEPVKKRRGRPRKYGPDSGEMSLGLNPGAPSFTVSQPSSGGDGGEKKRGRPPGSSSKRLKLQALGSTGIGFTPHVLTVLAGEDVSSKIMALTHNGPRAVCVLSANGAISNVTLRQSATSGGTVTYEGRFEILSLSGSFHLLENNGQRSRTGGLSVSLSSPDGNVLGGSVAGLLIAASPVQIVVGSFLPDGEKEPKQHVGQMGLSSPVLPRVAPTQVLMTPSSPQSRGTMSESSCGGGHGSPIHQSTGGPYNNTINMPWK.

The tract at residues Met-1–Leu-151 is disordered. Over residues His-23 to Gln-37 the composition is skewed to low complexity. Polar residues predominate over residues Ser-60 to Asn-77. Positions Lys-97–Lys-105 match the Bipartite nuclear localization signal motif. 2 consecutive DNA-binding regions (a.T hook) follow at residues Lys-97 to Asp-109 and Lys-138 to Lys-149. In terms of domain architecture, PPC spans Thr-159 to Pro-301. Polar residues-rich tracts occupy residues Met-310–Ser-325 and Ile-334–Lys-351. Residues Met-310 to Lys-351 form a disordered region.

It localises to the nucleus. Its function is as follows. Transcription factor that specifically binds AT-rich DNA sequences related to the nuclear matrix attachment regions (MARs). This is AT-hook motif nuclear-localized protein 10 from Arabidopsis thaliana (Mouse-ear cress).